An 84-amino-acid polypeptide reads, in one-letter code: MPIIKSAIERAKTNVKANERNSAQLSTMRTAVKRFEQAKTAGADNAEELYRKASAAVDKAASKGLIKRNKASRDKSRMAARLAK.

The protein belongs to the bacterial ribosomal protein bS20 family.

Binds directly to 16S ribosomal RNA. This is Small ribosomal subunit protein bS20 from Levilactobacillus brevis (strain ATCC 367 / BCRC 12310 / CIP 105137 / JCM 1170 / LMG 11437 / NCIMB 947 / NCTC 947) (Lactobacillus brevis).